A 143-amino-acid polypeptide reads, in one-letter code: Transcriptional regulator MraZ (143 aa).

SpoVT-AbrB domains follow at residues 5–47 (THSP…SQKE) and 76–119 (ASDE…DADA).

It belongs to the MraZ family. As to quaternary structure, forms oligomers.

It is found in the cytoplasm. The protein resides in the nucleoid. In Paenarthrobacter aurescens (strain TC1), this protein is Transcriptional regulator MraZ.